A 273-amino-acid chain; its full sequence is Ciliary microtubule inner protein 2B (273 aa).

Disordered regions lie at residues 59 to 85 (TLLPPIQSPRSPVISKGRLPPRRGHER) and 123 to 164 (RHGE…HASP). Residues 123 to 159 (RHGEQESHQLPDGAKGEREVEEDQLREAEEPPLKQEL) are compositionally biased toward basic and acidic residues.

It belongs to the CIMIP2 family. As to quaternary structure, microtubule inner protein component of sperm flagellar doublet microtubules. As to expression, expressed in airway epithelial cells.

The protein localises to the cytoplasm. It is found in the cytoskeleton. It localises to the cilium axoneme. Its subcellular location is the flagellum axoneme. Its function is as follows. Microtubule inner protein (MIP) part of the dynein-decorated doublet microtubules (DMTs) in cilia axoneme, which is required for motile cilia beating. This chain is Ciliary microtubule inner protein 2B (Cimip2b), found in Mus musculus (Mouse).